Consider the following 619-residue polypeptide: Thiohydroximate-O-sulfate sulfur/sulfate-lyase (nitrile-forming) NSP4 (619 aa).

2 Jacalin-type lectin domains span residues 2-142 (AQKV…YFAP) and 151-292 (AKKL…YISL). Kelch repeat units lie at residues 326–374 (KIYS…VCMV), 379–425 (TLYV…SMAA), 429–478 (NVYV…VVQG), 480–524 (VWVV…ASAA), and 528–583 (HIVI…GWTA). The active-site Proton donor is the Arg-386. Positions 386, 419, 441, 470, and 519 each coordinate a (Z)-N-(sulfonatooxy)alkanimidothioate. Arg-441 serves as the catalytic Proton donor. Fe(2+) is bound by residues Glu-535, Asp-539, and His-543. Residue Trp-581 participates in a (Z)-N-(sulfonatooxy)alkanimidothioate binding.

It belongs to the jacalin lectin family. The cofactor is Fe(2+). As to expression, mainly expressed in roots, and, to a lower extent, in seedlings and leaves. Observed in seeds.

The enzyme catalyses a (Z)-N-(sulfonatooxy)alkanimidothioate = a nitrile + sulfur + sulfate. It carries out the reaction (Z)-phenyl-N-(sulfonatooxy)methanimidothioate = phenylacetonitrile + sulfur + sulfate. The catalysed reaction is (Z)-N-(sulfonatooxy)prop-2-enimidothioate = but-3-enenitrile + sulfur + sulfate. Specifier protein that contributes to constitutive and herbivore-induced simple nitrile formation. Promotes simple nitriles, but not epithionitrile or thiocyanate formation. Converts allylglucosinolate and benzylglucosinolate (glucotropaeolin) to their corresponding simple nitriles in the presence of myrosinase. This Arabidopsis thaliana (Mouse-ear cress) protein is Thiohydroximate-O-sulfate sulfur/sulfate-lyase (nitrile-forming) NSP4.